Consider the following 807-residue polypeptide: Mechanosensitive cation channel TMEM63A (807 aa).

The Extracellular portion of the chain corresponds to 1–51 (MMDSPFLELWQSKAVSIREQLGLGDRPNDSYCYNSAKNSTVLQGVTFGGIP). A glycan (N-linked (GlcNAc...) asparagine) is linked at asparagine 38. Residues 52–74 (TVLLIDVSCFLFLILVFSIIRRR) form a helical membrane-spanning segment. Topologically, residues 75–134 (FWDYGRIALVSEADSESRFQRLSSTSSSGQQDFENELGCCPWLTAIFRLHDDQILEWCGE) are cytoplasmic. A helical membrane pass occupies residues 135-167 (DAIHYLSFQRHIIFLLVVVSFLSLCVILPVNLS). At 168–191 (GDLLDKDPYSFGRTTIANLQTDND) the chain is on the extracellular side. The chain crosses the membrane as a helical span at residues 192–217 (LLWLHTIFAVIYLFLTVGFMRHHTQS). Residues 218–416 (IKYKEENLVR…CWKNLSIQGL (199 aa)) lie on the Cytoplasmic side of the membrane. The interval 219-414 (KYKEENLVRR…DICWKNLSIQ (196 aa)) is intracellular linker IL2; confers mechanosensitivity. Residues 417–444 (RWWLQWLGINFTLFLGLFFLTTPSIILS) traverse the membrane as a helical segment. Topologically, residues 445-462 (TMDKFNVTKPIHALNNPI) are extracellular. Asparagine 450 carries N-linked (GlcNAc...) asparagine glycosylation. The helical transmembrane segment at 463-490 (ISQFFPTLLLWSFSALLPSIVYYSTLLE) threads the bilayer. Over 491-495 (SHWTK) the chain is Cytoplasmic. Residues 496-532 (SGENQIMMTKVYIFLIFMVLILPSLGLTSLDFFFRWL) traverse the membrane as a helical segment. Over 533–554 (FDKTSSEASIRLECVFLPDQGA) the chain is Extracellular. Residues 555-586 (FFVNYVIASAFIGNGMELLRLPGLILYTFRMI) traverse the membrane as a helical segment. The segment at 555 to 586 (FFVNYVIASAFIGNGMELLRLPGLILYTFRMI) is gating helix. At 587–606 (MAKTAADRRNVKQNQAFQYE) the chain is on the cytoplasmic side. The helical transmembrane segment at 607–624 (FGAMYAWMLCVFTVIVAY) threads the bilayer. Topologically, residues 625 to 628 (SITC) are extracellular. The chain crosses the membrane as a helical span at residues 629–651 (PIIAPFGLIYILLKHMVDRHNLY). Residues 652 to 661 (FVYLPAKLEK) are Cytoplasmic-facing. A helical transmembrane segment spans residues 662–689 (GIHFAAVNQALAAPILCLFWLYFFSFLR). Topologically, residues 690–694 (LGMKA) are extracellular. A helical membrane pass occupies residues 695-709 (PATLFTFLVLLLTIL). Residues 710 to 807 (VCLAHTCFGC…GSVAAAPQEA (98 aa)) are Cytoplasmic-facing. A Phosphoserine modification is found at serine 739.

This sequence belongs to the CSC1 (TC 1.A.17) family. In terms of assembly, monomer. Post-translationally, N-Glycosylated.

Its subcellular location is the lysosome membrane. It localises to the early endosome membrane. The protein localises to the cell membrane. It carries out the reaction Ca(2+)(in) = Ca(2+)(out). In terms of biological role, mechanosensitive cation channel with low conductance and high activation threshold. In contrast to TMEM63B, does not show phospholipid scramblase activity. Acts as a regulator of lysosomal morphology by mediating lysosomal mechanosensitivity. Important for the baby's first breath and respiration throughout life. Upon lung inflation conducts cation currents in alveolar type 1 and 2 cells triggering lamellar body exocytosis and surfactant secretion into airspace. Also acts as an osmosensitive cation channel preferentially activated by hypotonic stress. In Homo sapiens (Human), this protein is Mechanosensitive cation channel TMEM63A.